A 753-amino-acid chain; its full sequence is MAAGSTTLHAVEKLQVRLATKTEPKKLEKYLQKLSALPMTADILAETGIRKTVKRLRKHQHVGDFARDLAARWKKLVLVDRNTRPGPQDPEESASRQRFGEALQDQEKAWGFPENATAPRSPSHSPEHRRTARRTPPGQQRPHPRSHSREPRAERKCPRIAPADSGRYRASPTRTAPLRMPEGPEPAAPGKQPGRGHTHAAQGGPLLCPGCQGQPQGKAVVSHSKGHKSSRQEKRPLCAQGDWHSPTLIREKSCGACLREETPRMPSWASARDRQPSDFKTDKEGGQAGSGQRVPALEEAPDSHQKRPQHSHSNKKRPSLDGRDPGNGTHGLSPEEKEQLSNDRETQEGKPPTAHLDRTSVSSLSEVEEVDMAEEFEQPTLSCEKYLTYDQLRKQKKKTGKSATTALGDKQRKANESKGTRESWDSAKKLPPVQESQSERLQAAGADSAGPKTVPSHVFSELWDLSEAWMQANYDPLSDSDSMTSQAKPEALSSPKFREEAAFPGRRVNAKMPVYSGSRPACQLQVPTLRQQCAQVLRNNPDALSDVGEVPYWVLEPVLEGWRPDQLYRRKKDNHALVRETDELRRNHCFQDFKEEKPQENKTWREQYLRLPDAPEQRLRVMTTNIRSARGNNPNGREAKMICFKSVAKTPYDTSRRQEKSAGDADPENGEIKPASKPAGSSHTPSSQSSSGGGRDSSSSILRWLPEKRANPCLSSSNEHAAPAAKTRKQAAKKVAPLMAKAIRDYKRRFSRR.

The region spanning 5–80 is the TFIIS N-terminal domain; the sequence is STTLHAVEKL…ARWKKLVLVD (76 aa). Disordered stretches follow at residues 80–245, 261–453, and 477–497; these read DRNT…DWHS, ETPR…GPKT, and LSDS…SPKF. Basic and acidic residues-rich tracts occupy residues 147–157 and 271–285; these read HSREPRAERKC and ARDR…DKEG. Positions 306-317 are enriched in basic residues; that stretch reads KRPQHSHSNKKR. The span at 333 to 348 shows a compositional bias: basic and acidic residues; it reads SPEEKEQLSNDRETQE. Acidic residues predominate over residues 366–377; the sequence is EVEEVDMAEEFE. Basic and acidic residues predominate over residues 409–428; the sequence is DKQRKANESKGTRESWDSAK. The tract at residues 500-659 is activation domain; that stretch reads EAAFPGRRVN…TPYDTSRRQE (160 aa). The segment at 528-537 is BC-box; it reads TLRQQCAQVL. The tract at residues 528-537 is interacting with Elongin BC complex; the sequence is TLRQQCAQVL. The disordered stretch occupies residues 650-735; the sequence is TPYDTSRRQE…KTRKQAAKKV (86 aa). The segment covering 654–663 has biased composition (basic and acidic residues); the sequence is TSRRQEKSAG. The segment covering 680 to 700 has biased composition (low complexity); sequence GSSHTPSSQSSSGGGRDSSSS.

Heterotrimer of an A (ELOA, ELOA2 or ELOA3P), ELOB and ELOC subunit. Specifically expressed in testis.

It is found in the nucleus. In terms of biological role, SIII, also known as elongin, is a general transcription elongation factor that increases the RNA polymerase II transcription elongation past template-encoded arresting sites. Subunit A2 is transcriptionally active but its transcription activity is not enhanced by binding to the dimeric complex of the SIII regulatory subunits B and C (elongin BC complex). The polypeptide is Elongin-A2 (Homo sapiens (Human)).